The chain runs to 236 residues: GTP cyclohydrolase 1 (236 aa).

The segment at 1–52 (MAAARSCNGYARREGPPSPKLGTEKPRVSAGSGGSGDGWRGERPRSEEDNEL) is disordered. Zn(2+)-binding residues include C127, H130, and C198.

This sequence belongs to the GTP cyclohydrolase I family. In terms of assembly, toroid-shaped homodecamer, composed of two pentamers of five dimers.

It is found in the cytoplasm. It localises to the nucleus. It catalyses the reaction GTP + H2O = 7,8-dihydroneopterin 3'-triphosphate + formate + H(+). The protein operates within cofactor biosynthesis; 7,8-dihydroneopterin triphosphate biosynthesis; 7,8-dihydroneopterin triphosphate from GTP: step 1/1. GTP shows a positive allosteric effect, and tetrahydrobiopterin inhibits the enzyme activity. Zinc is required for catalytic activity. Inhibited by Mg(2+). May positively regulate nitric oxide synthesis in endothelial cells. May be involved in dopamine synthesis. May modify pain sensitivity and persistence. In Gallus gallus (Chicken), this protein is GTP cyclohydrolase 1 (GCH1).